Consider the following 301-residue polypeptide: Rhodopsin (301 aa).

Topologically, residues L1 to M18 are extracellular. Residues Y19–V43 form a helical membrane-spanning segment. The Cytoplasmic segment spans residues F44–N55. A helical transmembrane segment spans residues L56–I78. At T79–C92 the chain is on the extracellular side. C92 and C169 are disulfide-bonded. A helical membrane pass occupies residues Q93–F115. The 'Ionic lock' involved in activated form stabilization signature appears at D116 to Y118. Residues D116–K134 lie on the Cytoplasmic side of the membrane. Residues A135–F155 form a helical membrane-spanning segment. Over G156–S182 the chain is Extracellular. A glycan (N-linked (GlcNAc...) asparagine) is linked at N165. A helical membrane pass occupies residues Y183 to V204. Residues V205 to K245 are Cytoplasmic-facing. Residues I246 to V267 form a helical membrane-spanning segment. The Extracellular segment spans residues G268–V278. Residues Y279–I300 traverse the membrane as a helical segment. K288 carries the N6-(retinylidene)lysine modification.

It belongs to the G-protein coupled receptor 1 family. Opsin subfamily. Homodimer. Interacts with GNAQ. Contains one covalently linked retinal chromophore.

The protein resides in the cell projection. The protein localises to the rhabdomere membrane. In terms of biological role, photoreceptor required for image-forming vision at low light intensity. Can use both retinal and 3-dehydroretinal as visual pigment. Light-induced isomerization of 11-cis to all-trans retinal triggers a conformational change that activates signaling via G-proteins. Signaling via GNAQ probably mediates the activation of phospholipase C. This is Rhodopsin (RHO) from Orconectes australis (Southern cave crayfish).